A 670-amino-acid chain; its full sequence is DNA ligase (670 aa).

NAD(+) contacts are provided by residues 33 to 37 (DAEYD), 82 to 83 (SL), and E114. Residue K116 is the N6-AMP-lysine intermediate of the active site. NAD(+) contacts are provided by R137, E173, K291, and K315. 4 residues coordinate Zn(2+): C409, C412, C427, and C433. The region spanning 592–670 (VQSDRLSGNT…ENALAELLSD (79 aa)) is the BRCT domain.

It belongs to the NAD-dependent DNA ligase family. LigA subfamily. Mg(2+) serves as cofactor. Mn(2+) is required as a cofactor.

The enzyme catalyses NAD(+) + (deoxyribonucleotide)n-3'-hydroxyl + 5'-phospho-(deoxyribonucleotide)m = (deoxyribonucleotide)n+m + AMP + beta-nicotinamide D-nucleotide.. Functionally, DNA ligase that catalyzes the formation of phosphodiester linkages between 5'-phosphoryl and 3'-hydroxyl groups in double-stranded DNA using NAD as a coenzyme and as the energy source for the reaction. It is essential for DNA replication and repair of damaged DNA. This Idiomarina loihiensis (strain ATCC BAA-735 / DSM 15497 / L2-TR) protein is DNA ligase.